Consider the following 195-residue polypeptide: COMM domain-containing protein 3 (195 aa).

The COMM domain occupies 124 to 193 (HITDVSWRLE…DASKSLERAT (70 aa)).

The protein belongs to the COMM domain-containing protein 3 family. Component of the commander complex consisting of the CCC subcomplex and the retriever subcomplex. Component of the CCC (COMMD/CCDC22/CCDC93) subcomplex consisting of COMMD1, COMMD2, COMMD3, COMMD4, COMMD5, COMMD6, COMMD7, COMMD8, COMMD9, COMMD10, CCDC22 and CCDC93; within the complex forms a heterodimer with COMMD2. Interacts with NFKB1/p105. Interacts with CCDC22, CCDC93, SCNN1B, CUL3, CUL4A, CUL4B, CUL5.

It is found in the cytoplasm. The protein resides in the nucleus. Scaffold protein in the commander complex that is essential for endosomal recycling of transmembrane cargos; the commander complex is composed of the CCC subcomplex and the retriever subcomplex. May modulate activity of cullin-RING E3 ubiquitin ligase (CRL) complexes. May down-regulate activation of NF-kappa-B. Modulates Na(+) transport in epithelial cells by regulation of apical cell surface expression of amiloride-sensitive sodium channel (ENaC) subunits. The sequence is that of COMM domain-containing protein 3 (COMMD3) from Bos taurus (Bovine).